Consider the following 294-residue polypeptide: NAD kinase (294 aa).

Catalysis depends on aspartate 72, which acts as the Proton acceptor. NAD(+) contacts are provided by residues 72–73, 146–147, arginine 157, arginine 174, aspartate 176, 187–192, and glutamine 247; these read DG, ND, and TAYSLS.

The protein belongs to the NAD kinase family. It depends on a divalent metal cation as a cofactor.

Its subcellular location is the cytoplasm. It carries out the reaction NAD(+) + ATP = ADP + NADP(+) + H(+). Its function is as follows. Involved in the regulation of the intracellular balance of NAD and NADP, and is a key enzyme in the biosynthesis of NADP. Catalyzes specifically the phosphorylation on 2'-hydroxyl of the adenosine moiety of NAD to yield NADP. The protein is NAD kinase of Marinobacter nauticus (strain ATCC 700491 / DSM 11845 / VT8) (Marinobacter aquaeolei).